A 374-amino-acid polypeptide reads, in one-letter code: MKPATATISREALRHNIELIKTFAPQQKLLAMIKANAYGQGLLPAADTLADLVEGFGVARLREALEIQETGYTGKILLIEGFFDREELLKTLSRRFDTVIHCQEQLELLEQVAEEWQQEQQKGFWKRKAKIYFPINVWLKIDTGMHRLGVHPEQVDMFYQRLKACPLVESISFVSHFSRADEPDCGYTEKQIAIFEAATSPYPTHERSISASSGILYWKQAHYDWVRPGIIMHGISPHYTPITDLGFKPVMTLSSSLIAVRTHKAGEPVGYGGTWISDKDTKLGVVAMGYGDGYPRNAPEGTPVLVNGRIVPIVGRVSMDMLTVDLGADSQDKVGDEVIFWGKDLLIEEVAQHIGVISYELITKLTPRVIFEYE.

The active-site Proton acceptor; specific for D-alanine is the Lys34. Position 34 is an N6-(pyridoxal phosphate)lysine (Lys34). Arg147 provides a ligand contact to substrate. Tyr271 functions as the Proton acceptor; specific for L-alanine in the catalytic mechanism. Met319 contributes to the substrate binding site.

This sequence belongs to the alanine racemase family. The cofactor is pyridoxal 5'-phosphate.

It carries out the reaction L-alanine = D-alanine. It functions in the pathway amino-acid biosynthesis; D-alanine biosynthesis; D-alanine from L-alanine: step 1/1. Functionally, catalyzes the interconversion of L-alanine and D-alanine. May also act on other amino acids. The protein is Alanine racemase (alr) of Actinobacillus pleuropneumoniae serotype 5b (strain L20).